Consider the following 84-residue polypeptide: Small ribosomal subunit protein bS20 (84 aa).

This sequence belongs to the bacterial ribosomal protein bS20 family.

Binds directly to 16S ribosomal RNA. The polypeptide is Small ribosomal subunit protein bS20 (Parabacteroides distasonis (strain ATCC 8503 / DSM 20701 / CIP 104284 / JCM 5825 / NCTC 11152)).